A 92-amino-acid chain; its full sequence is Small ribosomal subunit protein bS20 (92 aa).

A disordered region spans residues 1–23 (MANTTSAKKATRKIARRTDVNKA).

This sequence belongs to the bacterial ribosomal protein bS20 family.

Its function is as follows. Binds directly to 16S ribosomal RNA. This is Small ribosomal subunit protein bS20 from Rhizobium leguminosarum bv. trifolii (strain WSM2304).